The primary structure comprises 33 residues: Dermaseptin-4 (33 aa).

L33 bears the Leucine amide mark.

Expressed by the skin glands.

The protein resides in the secreted. Its function is as follows. Has antiparasitic activity against trypomastigote form of T.cruzi (IC(50)=0.25 uM) in vitro but not against L.infantum. Probably acts by permeabilizing cell membranes. In vitro, shows no cytotoxicity against macrophages. Has antibacterial activity. The polypeptide is Dermaseptin-4 (Pithecopus nordestinus (Northeastern Brazilian leaf frog)).